The sequence spans 340 residues: DNA-directed RNA polymerase subunit alpha (340 aa).

The segment at 1 to 236 is alpha N-terminal domain (alpha-NTD); sequence MLSLSKNWNT…EQLQLFISFE (236 aa). Residues 251-340 are alpha C-terminal domain (alpha-CTD); that stretch reads FSPYLLKRVD…LSKRYEDSYN (90 aa).

Belongs to the RNA polymerase alpha chain family. Homodimer. The RNAP catalytic core consists of 2 alpha, 1 beta, 1 beta' and 1 omega subunit. When a sigma factor is associated with the core the holoenzyme is formed, which can initiate transcription.

The catalysed reaction is RNA(n) + a ribonucleoside 5'-triphosphate = RNA(n+1) + diphosphate. DNA-dependent RNA polymerase catalyzes the transcription of DNA into RNA using the four ribonucleoside triphosphates as substrates. The polypeptide is DNA-directed RNA polymerase subunit alpha (Rickettsia akari (strain Hartford)).